Reading from the N-terminus, the 180-residue chain is Large ribosomal subunit protein uL5 (180 aa).

Belongs to the universal ribosomal protein uL5 family. In terms of assembly, part of the 50S ribosomal subunit; part of the 5S rRNA/L5/L18/L25 subcomplex. Contacts the 5S rRNA and the P site tRNA. Forms a bridge to the 30S subunit in the 70S ribosome.

Functionally, this is one of the proteins that bind and probably mediate the attachment of the 5S RNA into the large ribosomal subunit, where it forms part of the central protuberance. In the 70S ribosome it contacts protein S13 of the 30S subunit (bridge B1b), connecting the 2 subunits; this bridge is implicated in subunit movement. Contacts the P site tRNA; the 5S rRNA and some of its associated proteins might help stabilize positioning of ribosome-bound tRNAs. The protein is Large ribosomal subunit protein uL5 of Polynucleobacter asymbioticus (strain DSM 18221 / CIP 109841 / QLW-P1DMWA-1) (Polynucleobacter necessarius subsp. asymbioticus).